We begin with the raw amino-acid sequence, 346 residues long: Probable choline kinase 1 (346 aa).

Positions 73, 210, and 227 each coordinate ATP.

This sequence belongs to the choline/ethanolamine kinase family. In terms of tissue distribution, expressed in roots. Expressed at low levels in cauline leaves and flowers.

It carries out the reaction choline + ATP = phosphocholine + ADP + H(+). Its pathway is phospholipid metabolism; phosphatidylcholine biosynthesis; phosphocholine from choline: step 1/1. Involved in phospholipid biosynthesis. Catalyzes the first step in phosphatidylcholine biosynthesis. In Arabidopsis thaliana (Mouse-ear cress), this protein is Probable choline kinase 1 (CK1).